Here is a 158-residue protein sequence, read N- to C-terminus: Small ribosomal subunit protein uS9 (158 aa).

Belongs to the universal ribosomal protein uS9 family.

The polypeptide is Small ribosomal subunit protein uS9 (Brucella anthropi (strain ATCC 49188 / DSM 6882 / CCUG 24695 / JCM 21032 / LMG 3331 / NBRC 15819 / NCTC 12168 / Alc 37) (Ochrobactrum anthropi)).